A 248-amino-acid chain; its full sequence is Tyrosine recombinase XerD-like (248 aa).

The 72-residue stretch at 1–72 (MKSYIEPFIA…TANQFLYYLY (72 aa)) folds into the Core-binding (CB) domain. The Tyr recombinase domain maps to 85 to 248 (DTMKVMRTEK…PVTLEKYYKS (164 aa)). Residues Lys149 and Arg213 contribute to the active site. Tyr245 acts as the O-(3'-phospho-DNA)-tyrosine intermediate in catalysis.

It belongs to the 'phage' integrase family. XerD-like subfamily.

Its subcellular location is the cytoplasm. In terms of biological role, putative tyrosine recombinase. Not involved in the cutting and rejoining of the recombining DNA molecules on dif(SL) site. This Streptococcus pyogenes serotype M6 (strain ATCC BAA-946 / MGAS10394) protein is Tyrosine recombinase XerD-like.